The primary structure comprises 548 residues: Natural resistance-associated macrophage protein 1 (548 aa).

The tract at residues M1 to E38 is disordered. Residues M1–L55 lie on the Cytoplasmic side of the membrane. A helical transmembrane segment spans residues W56 to G73. At N74–G82 the chain is on the extracellular side. Residues A83–L102 form a helical membrane-spanning segment. Residues C103–E139 are Cytoplasmic-facing. The helical transmembrane segment at L140–L160 threads the bilayer. Residues S161–R164 lie on the Extracellular side of the membrane. A helical transmembrane segment spans residues I165–L184. Residues D185 to E193 are Cytoplasmic-facing. The helical transmembrane segment at A194–A214 threads the bilayer. The Extracellular portion of the chain corresponds to R215–E237. Residues L238 to L256 traverse the membrane as a helical segment. At H257–E284 the chain is on the cytoplasmic side. The chain crosses the membrane as a helical span at residues A285 to G304. Topologically, residues Q305 to G346 are extracellular. N-linked (GlcNAc...) asparagine glycosylation is found at N321 and N335. A helical membrane pass occupies residues V347–L366. The Cytoplasmic segment spans residues A367 to R397. A helical membrane pass occupies residues V398–F415. The Extracellular segment spans residues R416–D426. A helical membrane pass occupies residues L427–T447. Residues S448 to K463 lie on the Cytoplasmic side of the membrane. Residues V464 to V485 form a helical membrane-spanning segment. The Extracellular segment spans residues P486–Y493. Residues F494–W513 traverse the membrane as a helical segment. Residues T514–G548 are Cytoplasmic-facing.

It belongs to the NRAMP family.

The protein resides in the late endosome membrane. The protein localises to the lysosome membrane. The enzyme catalyses Zn(2+)(in) + H(+)(out) = Zn(2+)(out) + H(+)(in). The catalysed reaction is Fe(2+)(in) + H(+)(out) = Fe(2+)(out) + H(+)(in). It carries out the reaction Mn(2+)(in) + H(+)(out) = Mn(2+)(out) + H(+)(in). In terms of biological role, macrophage-specific antiporter that fluxes metal ions in either direction against a proton gradient. Localized to late endosomal lysosomal membranes, delivers bivalent cations from the cytosol into these acidic compartments where they may directly affect antimicrobial activity. Involved in iron metabolism and host natural resistance to infection with intracellular parasites. Pathogen resistance involves sequestration of Fe(2+) and Mn(2+), cofactors of both prokaryotic and eukaryotic catalases and superoxide dismutases, not only to protect the macrophage against its own generation of reactive oxygen species, but to deny the cations to the pathogen for synthesis of its protective enzymes. This chain is Natural resistance-associated macrophage protein 1 (SLC11A1), found in Cervus elaphus (Red deer).